The primary structure comprises 195 residues: Imidazoleglycerol-phosphate dehydratase (195 aa).

It belongs to the imidazoleglycerol-phosphate dehydratase family.

The protein resides in the cytoplasm. It catalyses the reaction D-erythro-1-(imidazol-4-yl)glycerol 3-phosphate = 3-(imidazol-4-yl)-2-oxopropyl phosphate + H2O. The protein operates within amino-acid biosynthesis; L-histidine biosynthesis; L-histidine from 5-phospho-alpha-D-ribose 1-diphosphate: step 6/9. In Burkholderia cenocepacia (strain HI2424), this protein is Imidazoleglycerol-phosphate dehydratase.